Here is a 69-residue protein sequence, read N- to C-terminus: Large ribosomal subunit protein uL29 (69 aa).

Belongs to the universal ribosomal protein uL29 family.

This Rhodospirillum centenum (strain ATCC 51521 / SW) protein is Large ribosomal subunit protein uL29.